We begin with the raw amino-acid sequence, 873 residues long: MASRRKSTTPCMVLASEQDPDLELISDLDEGPPVLTPVENSRAESISSDEEVHESVDSDNQQNKKVEGGYECKYCTFQTPDLNMFTFHVDSEHPNVVLNSSYVCVECNFLTKRYDALSEHNLKYHPGEENFKLTMVKRNNQTIFEQTINDLTFDGSFVKEENAEQAESTEVSSSGISISKTPIMKMMKNKVENKRIAVHHNSVEDVPEEKENEIKPDREEIVENPSSSASESNTSTSIVNRIHPSTASTVVTPAAVLPGLAQVITAVSAQQNSNLIPKVLIPVNSIPTYNAALDNNPLLLNTYNKFPYPTMSEITVLSAQAKYTEEQIKIWFSAQRLKHGVSWTPEEVEEARRKQFNGTVHTVPQTITVIPTHISTGSNGLPSILQTCQIVGQPGLVLTQVAGTNTLPVTAPIALTVAGIPSQNNVQKSQVPAAQPTAETKPATAAVPTSQSVKHETALVNPDSFGIRAKKTKEQLAELKVSYLKNQFPHDSEIIRLMKITGLTKGEIKKWFSDTRYNQRNSKSNQCLHLNNDSSTTIIIDSSDETTESPTVGTAQPKQSWNPFPDFTPQKFKEKTAEQLRVLQASFLNSSVLTDEELNRLRAQTKLTRREIDAWFTEKKKSKALKEEKMEIDESNAGSSKEEAGETSPGDESGAPKSGSTGKICKKTPEQLHMLKSAFVRTQWPSPEEYDKLAKESGLARTDIVSWFGDTRYAWKNGNLKWYYYYQSANSSSMNGLSSLRKRGRGRPKGRGRGRPRGRPRGSKRINNWDRGPSLIKFKTGTAILKDYYLKHKFLNEQDLDELVNKSHMGYEQVREWFAERQRRSELGIELFEENEEEDEVIDDQEEDEEETDDSDTWEPPRHVKRKLSKSDD.

The tract at residues 1 to 63 is disordered; it reads MASRRKSTTP…ESVDSDNQQN (63 aa). A compositionally biased stretch (acidic residues) spans 18–30; sequence QDPDLELISDLDE. Thr-36 carries the post-translational modification Phosphothreonine. 3 positions are modified to phosphoserine: Ser-45, Ser-47, and Ser-48. 2 consecutive C2H2-type zinc fingers follow at residues 70-93 and 102-125; these read YECK…DSEH and YVCV…LKYH. Residue Lys-159 forms a Glycyl lysine isopeptide (Lys-Gly) (interchain with G-Cter in SUMO2) linkage. Position 202 is a phosphoserine (Ser-202). Residues 202–236 form a disordered region; it reads SVEDVPEEKENEIKPDREEIVENPSSSASESNTST. The span at 212–221 shows a compositional bias: basic and acidic residues; sequence NEIKPDREEI. Residues 223 to 236 are compositionally biased toward low complexity; the sequence is ENPSSSASESNTST. The required for dimerization stretch occupies residues 272 to 432; it reads NSNLIPKVLI…QNNVQKSQVP (161 aa). Residues 272–564 form a required for interaction with NFYA region; that stretch reads NSNLIPKVLI…AQPKQSWNPF (293 aa). A DNA-binding region (homeobox 1) is located at residues 284–346; that stretch reads NSIPTYNAAL…LKHGVSWTPE (63 aa). Residues Lys-441, Lys-454, Lys-485, and Lys-629 each participate in a glycyl lysine isopeptide (Lys-Gly) (interchain with G-Cter in SUMO2) cross-link. 2 DNA-binding regions (homeobox) span residues 464–526 and 569–630; these read SFGI…KSNQ and PQKF…EEKM. Disordered stretches follow at residues 626 to 667 and 732 to 769; these read KEEK…ICKK and SSMN…INNW. The residue at position 648 (Ser-648) is a Phosphoserine. Positions 660–722 form a DNA-binding region, homeobox 4; sequence STGKICKKTP…YAWKNGNLKW (63 aa). Residues 734-768 form a required for nuclear localization region; it reads MNGLSSLRKRGRGRPKGRGRGRPRGRPRGSKRINN. The segment covering 740 to 764 has biased composition (basic residues); the sequence is LRKRGRGRPKGRGRGRPRGRPRGSK. Ser-774 is modified (phosphoserine). The segment at residues 777–832 is a DNA-binding region (homeobox 5); sequence KFKTGTAILKDYYLKHKFLNEQDLDELVNKSHMGYEQVREWFAERQRRSELGIELF. Residues 829–873 are disordered; sequence IELFEENEEEDEVIDDQEEDEEETDDSDTWEPPRHVKRKLSKSDD. Over residues 831-857 the composition is skewed to acidic residues; the sequence is LFEENEEEDEVIDDQEEDEEETDDSDT. The required for repressor activity stretch occupies residues 831-873; the sequence is LFEENEEEDEVIDDQEEDEEETDDSDTWEPPRHVKRKLSKSDD. The segment covering 863-873 has biased composition (basic residues); that stretch reads HVKRKLSKSDD.

Belongs to the ZHX family. As to quaternary structure, forms homodimers. Also forms heterodimers with ZHX3 which is a prerequisite for repressor activity and with ZHX2. Interacts with NFYA. Interacts with ATF7IP.

The protein localises to the nucleus. Its function is as follows. Acts as a transcriptional repressor. The chain is Zinc fingers and homeoboxes protein 1 (ZHX1) from Gorilla gorilla gorilla (Western lowland gorilla).